The primary structure comprises 899 residues: Alanine--tRNA ligase, chloroplastic/mitochondrial (899 aa).

Zn(2+) is bound by residues H581, H585, C683, and H687.

The protein belongs to the class-II aminoacyl-tRNA synthetase family. In terms of assembly, monomer. Requires Zn(2+) as cofactor.

Its subcellular location is the plastid. The protein resides in the chloroplast. It is found in the mitochondrion. The catalysed reaction is tRNA(Ala) + L-alanine + ATP = L-alanyl-tRNA(Ala) + AMP + diphosphate. Functionally, catalyzes the attachment of alanine to tRNA(Ala) in a two-step reaction: alanine is first activated by ATP to form Ala-AMP and then transferred to the acceptor end of tRNA(Ala). Also edits incorrectly charged tRNA(Ala) via its editing domain. This chain is Alanine--tRNA ligase, chloroplastic/mitochondrial, found in Micromonas pusilla (strain CCMP1545) (Picoplanktonic green alga).